The chain runs to 1029 residues: U2 snRNP-associated SURP motif-containing protein (1029 aa).

Disordered stretches follow at residues M1–E110 and V141–T273. Residue A2 is modified to N-acetylalanine. Residues G7 to N16 are compositionally biased toward polar residues. Residues T45–N54 are compositionally biased toward basic residues. Residues Y55 to L64 show a composition bias toward basic and acidic residues. S67 carries the phosphoserine modification. K80 is covalently cross-linked (Glycyl lysine isopeptide (Lys-Gly) (interchain with G-Cter in SUMO2)). The stretch at A92–L121 forms a coiled coil. Basic and acidic residues-rich tracts occupy residues S97–E110 and A144–G155. Glycyl lysine isopeptide (Lys-Gly) (interchain with G-Cter in SUMO2) cross-links involve residues K145 and K168. Residues N169–R178 show a composition bias toward polar residues. Residues E186–H222 show a composition bias toward basic and acidic residues. Positions L192–E232 form a coiled coil. The residue at position 202 (S202) is a Phosphoserine. A Glycyl lysine isopeptide (Lys-Gly) (interchain with G-Cter in SUMO2) cross-link involves residue K208. S236 carries the phosphoserine modification. Residues D239–S249 are compositionally biased toward basic and acidic residues. The RRM domain occupies T274–A355. The SURP motif repeat unit spans residues L430 to Y473. S485 is subject to Phosphoserine. The region spanning L534–V679 is the CID domain. The segment at D704–I729 is disordered. T719 is modified (phosphothreonine). Glycyl lysine isopeptide (Lys-Gly) (interchain with G-Cter in SUMO2) cross-links involve residues K748 and K749. K760 is subject to N6-acetyllysine; alternate. Residue K760 forms a Glycyl lysine isopeptide (Lys-Gly) (interchain with G-Cter in SUMO2); alternate linkage. Disordered regions lie at residues K778–R841 and Q855–H1029. Residues E786–T806 are compositionally biased toward acidic residues. A phosphoserine mark is found at S788, S800, and S811. Composition is skewed to basic and acidic residues over residues K810–R841 and Q874–R922. Glycyl lysine isopeptide (Lys-Gly) (interchain with G-Cter in SUMO2) cross-links involve residues K829 and K832. Residues S837–K915 adopt a coiled-coil conformation. T931 bears the Phosphothreonine mark. 2 positions are modified to phosphoserine: S946 and S948. Positions K950 to K980 are enriched in basic and acidic residues. Basic residues predominate over residues T991–H1029.

It belongs to the splicing factor SR family. In terms of assembly, interacts with ERBB4.

It is found in the nucleus. The chain is U2 snRNP-associated SURP motif-containing protein (U2surp) from Mus musculus (Mouse).